The chain runs to 272 residues: 3-methyl-2-oxobutanoate hydroxymethyltransferase (272 aa).

Residues D51 and D90 each coordinate Mg(2+). Residues 51 to 52, D90, and K118 each bind 3-methyl-2-oxobutanoate; that span reads DS. E120 serves as a coordination point for Mg(2+). Residue E187 is the Proton acceptor of the active site.

The protein belongs to the PanB family. In terms of assembly, homodecamer; pentamer of dimers. The cofactor is Mg(2+).

It localises to the cytoplasm. It catalyses the reaction 3-methyl-2-oxobutanoate + (6R)-5,10-methylene-5,6,7,8-tetrahydrofolate + H2O = 2-dehydropantoate + (6S)-5,6,7,8-tetrahydrofolate. It functions in the pathway cofactor biosynthesis; (R)-pantothenate biosynthesis; (R)-pantoate from 3-methyl-2-oxobutanoate: step 1/2. Functionally, catalyzes the reversible reaction in which hydroxymethyl group from 5,10-methylenetetrahydrofolate is transferred onto alpha-ketoisovalerate to form ketopantoate. In Xylella fastidiosa (strain M23), this protein is 3-methyl-2-oxobutanoate hydroxymethyltransferase.